A 394-amino-acid polypeptide reads, in one-letter code: Phosphoglycerate kinase (394 aa).

Substrate contacts are provided by residues 21–23 (DFN), Arg36, 59–62 (HLGR), Arg118, and Arg151. Ser183 bears the Phosphoserine mark. 2 residues coordinate ATP: Lys201 and Gly292. Residue Thr299 is modified to Phosphothreonine. Residues Glu323 and 350-353 (GGDS) each bind ATP.

It belongs to the phosphoglycerate kinase family. Monomer.

The protein localises to the cytoplasm. It catalyses the reaction (2R)-3-phosphoglycerate + ATP = (2R)-3-phospho-glyceroyl phosphate + ADP. Its pathway is carbohydrate degradation; glycolysis; pyruvate from D-glyceraldehyde 3-phosphate: step 2/5. This chain is Phosphoglycerate kinase, found in Bacillus cereus (strain Q1).